Reading from the N-terminus, the 383-residue chain is Anhydro-N-acetylmuramic acid kinase (383 aa).

G9 to D16 lines the ATP pocket.

It belongs to the anhydro-N-acetylmuramic acid kinase family.

The enzyme catalyses 1,6-anhydro-N-acetyl-beta-muramate + ATP + H2O = N-acetyl-D-muramate 6-phosphate + ADP + H(+). Its pathway is amino-sugar metabolism; 1,6-anhydro-N-acetylmuramate degradation. The protein operates within cell wall biogenesis; peptidoglycan recycling. Functionally, catalyzes the specific phosphorylation of 1,6-anhydro-N-acetylmuramic acid (anhMurNAc) with the simultaneous cleavage of the 1,6-anhydro ring, generating MurNAc-6-P. Is required for the utilization of anhMurNAc either imported from the medium or derived from its own cell wall murein, and thus plays a role in cell wall recycling. This Clostridioides difficile (strain 630) (Peptoclostridium difficile) protein is Anhydro-N-acetylmuramic acid kinase.